The primary structure comprises 423 residues: MEAKQRTRHRDGEERRLVAAADGGAEEYDPWTAWLYKPHTISVLLVGACLLIWASGALDPEGASYHSSATSIKRGVWAMIAVFLAYCTLQAPSTILIRPHPAVWRLVHGLAVVYLVALAFLLFQNRDDARQFMKHLYPDLGVELPERSYGADCRLYVPENPKNKFINIYETLFDEFVVAHILGWWGKAVMIRNQLLLWVLSIGFELMELTFRHMLPNFNECWWDSIILDILICNWFGIWAGMHTVRYFDGKTYEWVGLSRQPSIMGKVKRSLSQFTPAQWDKDQWYPFMGPLRFVQVLFLCVVFMTVELNTFFLKFCLWIPPRNPLVVYRLILWWLIAIPTIREYNSYLQNSKPVKKVGAFCWLSLAICIVELLICMKFGHGLFHDPMPTWLIIFWSSVGVALVVFLLAWSWRNHLKYQRKRL.

9 helical membrane passes run 38 to 58 (PHTI…SGAL), 77 to 97 (WAMI…TILI), 103 to 123 (VWRL…FLLF), 195 to 215 (LLLW…RHML), 222 to 242 (WWDS…WAGM), 294 to 314 (FVQV…TFFL), 319 to 339 (WIPP…LIAI), 359 to 379 (GAFC…CMKF), and 390 to 410 (TWLI…LLAW).

It belongs to the CDP-alcohol phosphatidyltransferase class-I family.

It is found in the endoplasmic reticulum membrane. It carries out the reaction a CDP-1,2-diacyl-sn-glycerol + L-serine = a 1,2-diacyl-sn-glycero-3-phospho-L-serine + CMP + H(+). It participates in phospholipid metabolism; phosphatidylethanolamine biosynthesis; phosphatidylethanolamine from CDP-diacylglycerol: step 1/2. Catalyzes a base-exchange reaction in which the polar head group of phosphatidylethanolamine (PE) or phosphatidylcholine (PC) is replaced by L-serine. The chain is CDP-diacylglycerol--serine O-phosphatidyltransferase 2 (PSS2) from Oryza sativa subsp. japonica (Rice).